The chain runs to 417 residues: Gamma-glutamyl phosphate reductase (417 aa).

Belongs to the gamma-glutamyl phosphate reductase family.

It localises to the cytoplasm. It catalyses the reaction L-glutamate 5-semialdehyde + phosphate + NADP(+) = L-glutamyl 5-phosphate + NADPH + H(+). Its pathway is amino-acid biosynthesis; L-proline biosynthesis; L-glutamate 5-semialdehyde from L-glutamate: step 2/2. In terms of biological role, catalyzes the NADPH-dependent reduction of L-glutamate 5-phosphate into L-glutamate 5-semialdehyde and phosphate. The product spontaneously undergoes cyclization to form 1-pyrroline-5-carboxylate. The chain is Gamma-glutamyl phosphate reductase from Escherichia coli O6:K15:H31 (strain 536 / UPEC).